The following is a 1218-amino-acid chain: MPANQRKNTSQSSYLQTPRNIATPLTKNAGKIVTTPKKSSTSDSSETSPTMAQTTTKSNGQLPTPPTNNGAPTVNRKKQKRRAKQAARAAAEQAQGSQMSGGPTSGDVKRQMQELEARFRETGLDEQYDDDEQFDPADENAYYSDEEGDAYSGSYGHDGSSTNGYAIPTTNSSKKQKKKKKSKSSQSDHSNHANHGPNGSSHNHVSLPLPLQSPPSMQRGPGISKEKIWNTSSQEERERIKEFWLSLGEDERKSLVKVEKDAVLKKMKEQQKHSCSCTVCGRKRTAIEEELEVLYDAYYEELEQYANHQGGDGPPPMMPPPRRFGAMSGLQPPNRLPPVFNGQQPSRGRIVEQLGDDEDEEGDEEYSEDDGDEDDFSEEEPEEIPRSHATDFFNFGNSLTVQGGILTVADDLLKNDGKKFIEMMEQLAERRMAREEDAKEQYANANYGHPSNGSMHPHSHGHVHNHPPPPEEDEYDDEEDDEDEYDSQEEDYDEEEMDSMTEEQRMEEGRRMFQIFAARMFEQRVLTAYKEKVAKERQQKLLEELEEESRADSQKKAKRAKDAQKKKEKLLEKKRAMAEEKARKDAEKAAEEASLREIEEKKAEAQRLKREENRKKKEAQKKADEEERVRKESEKQRRLQEQRERQAEQERKQREAKERERKEKEELRRQALEAKEIKEKEAKERKEKHEREKREKEAKVKADKEARELQKREELSAQQAAVQAAQSAAHVSRRANQVPTPKLSHALASPHIPVAIPAVPKAPTPIKLRTNSQQDNYSIPRTPSSKYQSISPNSVTPLPNSPGPIGPPGKTPIQHPLLQHPQATSPIHSALKGPPGIPQSPYAGMQPMPGGFQPGMPMVPPGFGRPHHDPMFGLQQGIGSQFRPLQIPNGGIPPFQPGFNIHHMPQGRGFPMHGPPGFPQHSPNGMGSIGQLFGAPKETPPSQTHSRNQSGSFDGLSSATQAQPIARPTPIGRPSSIVHGTRHSDNFNSGESDETSKHLGSSALLDDTDEPINIGVGARRSSAAPGNPGRQNFLPPPFGMDRSDPASMMSSFNTWGAPPNPFGSSSLPGSNGFGGGWNTSLNMNGSFGMTNYYHSQPRSVAVRLRICGACQNLQNSTQDGWLDIDAIKNEIALSTTVREEPLSERELLDICDTEGNPMNGGGTFEIRSSDGKSQIHFVSDSMSHDFRSAGAPGEIGSPISGGASRNLGPPGRAPIGGF.

The span at 1 to 26 (MPANQRKNTSQSSYLQTPRNIATPLT) shows a compositional bias: polar residues. Disordered stretches follow at residues 1–237 (MPAN…QEER), 306–391 (ANHQ…HATD), 431–508 (RMAR…RMEE), 544–745 (ELEE…KLSH), 765–810 (PIKL…PPGK), 911–1010 (PMHG…DTDE), 1018–1037 (ARRS…LPPP), and 1190–1218 (GAPG…IGGF). Positions 34–50 (TTPKKSSTSDSSETSPT) are enriched in low complexity. Residues 51–72 (MAQTTTKSNGQLPTPPTNNGAP) show a composition bias toward polar residues. Basic residues predominate over residues 75 to 85 (NRKKQKRRAKQ). A compositionally biased stretch (low complexity) spans 86 to 95 (AARAAAEQAQ). Over residues 107 to 123 (DVKRQMQELEARFRETG) the composition is skewed to basic and acidic residues. Residues 124 to 149 (LDEQYDDDEQFDPADENAYYSDEEGD) are compositionally biased toward acidic residues. Polar residues predominate over residues 159–171 (GSSTNGYAIPTTN). Positions 174-183 (KKQKKKKKSK) are enriched in basic residues. Positions 206-216 (SLPLPLQSPPS) are enriched in low complexity. Over residues 224 to 237 (SKEKIWNTSSQEER) the composition is skewed to basic and acidic residues. The span at 313–322 (GPPPMMPPPR) shows a compositional bias: pro residues. Over residues 354–382 (LGDDEDEEGDEEYSEDDGDEDDFSEEEPE) the composition is skewed to acidic residues. A coiled-coil region spans residues 421–714 (IEMMEQLAER…EARELQKREE (294 aa)). Residues 431-440 (RMAREEDAKE) are compositionally biased toward basic and acidic residues. Residues 470–501 (PEEDEYDDEEDDEDEYDSQEEDYDEEEMDSMT) are compositionally biased toward acidic residues. The span at 544–715 (ELEEESRADS…ARELQKREEL (172 aa)) shows a compositional bias: basic and acidic residues. A compositionally biased stretch (low complexity) spans 716 to 730 (SAQQAAVQAAQSAAH). Over residues 769–796 (RTNSQQDNYSIPRTPSSKYQSISPNSVT) the composition is skewed to polar residues. Positions 799–810 (PNSPGPIGPPGK) are enriched in pro residues. Polar residues predominate over residues 940 to 963 (PPSQTHSRNQSGSFDGLSSATQAQ).

The protein belongs to the NST1 family.

It is found in the cytoplasm. Its function is as follows. May act as a negative regulator of salt tolerance. This is Stress response protein nst1 (nst1) from Botryotinia fuckeliana (strain B05.10) (Noble rot fungus).